A 328-amino-acid chain; its full sequence is DNA-directed RNA polymerase subunit alpha (328 aa).

Residues 1–234 (MQTAVNEFLT…QQLAVFVDLE (234 aa)) form an alpha N-terminal domain (alpha-NTD) region. Residues 248–328 (IDPILLRPVD…NWPPASLKND (81 aa)) are alpha C-terminal domain (alpha-CTD).

It belongs to the RNA polymerase alpha chain family. As to quaternary structure, homodimer. The RNAP catalytic core consists of 2 alpha, 1 beta, 1 beta' and 1 omega subunit. When a sigma factor is associated with the core the holoenzyme is formed, which can initiate transcription.

It carries out the reaction RNA(n) + a ribonucleoside 5'-triphosphate = RNA(n+1) + diphosphate. Its function is as follows. DNA-dependent RNA polymerase catalyzes the transcription of DNA into RNA using the four ribonucleoside triphosphates as substrates. The sequence is that of DNA-directed RNA polymerase subunit alpha from Cellvibrio japonicus (strain Ueda107) (Pseudomonas fluorescens subsp. cellulosa).